A 58-amino-acid polypeptide reads, in one-letter code: Conotoxin Im5.4 (58 aa).

The signal sequence occupies residues 1 to 18 (MRCLPVVVFLLLLLSAAA). Positions 19–28 (APGVGSKTER) are excised as a propeptide.

Belongs to the conotoxin T superfamily. In terms of processing, contains 2 disulfide bonds that can be either 'C1-C3, C2-C4' or 'C1-C4, C2-C3', since these disulfide connectivities have been observed for conotoxins with cysteine framework V (for examples, see AC P0DQQ7 and AC P81755). As to expression, expressed by the venom duct.

It is found in the secreted. In terms of biological role, probable neurotoxin. The polypeptide is Conotoxin Im5.4 (Conus imperialis (Imperial cone)).